A 141-amino-acid chain; its full sequence is Putative pre-16S rRNA nuclease (141 aa).

The protein belongs to the YqgF nuclease family.

The protein localises to the cytoplasm. In terms of biological role, could be a nuclease involved in processing of the 5'-end of pre-16S rRNA. The sequence is that of Putative pre-16S rRNA nuclease from Acetivibrio thermocellus (strain ATCC 27405 / DSM 1237 / JCM 9322 / NBRC 103400 / NCIMB 10682 / NRRL B-4536 / VPI 7372) (Clostridium thermocellum).